Here is a 209-residue protein sequence, read N- to C-terminus: MAIISQFFAPLPSLTGTLTLTGRSFLPLNLDTQFPKPRLSRDRAATLVLQSKGDDSVDASDRIISAVCYFYPFFDGIQYGKFIITQYQPFQILIQPLFPAIRAFKSFPFNGFLIFITLYFVVVRNPNFSRYVRFNTMQAIVLDVLLIFPDLLERSFNPRDGFGLDVVMSLDSTVFLFLLVSLIYGFSACLFGLTPRLPLVAEAADRQVL.

Residues 1–49 (MAIISQFFAPLPSLTGTLTLTGRSFLPLNLDTQFPKPRLSRDRAATLVL) constitute a chloroplast transit peptide. 4 helical membrane-spanning segments follow: residues 63 to 83 (IISA…GKFI), 103 to 123 (AFKS…FVVV), 132 to 152 (VRFN…PDLL), and 173 to 193 (TVFL…LFGL).

The protein belongs to the Tic20 family. As to quaternary structure, part of the Tic complex. In terms of tissue distribution, expressed in leaves, siliques and roots.

Its subcellular location is the plastid. The protein resides in the chloroplast inner membrane. In terms of biological role, may be involved in protein precursor import into chloroplasts. Not redundant with TIC20-I, TIC20-II or TIC20-IV. In Arabidopsis thaliana (Mouse-ear cress), this protein is Protein TIC 20-v, chloroplastic (TIC20-V).